The chain runs to 84 residues: Delta-conotoxin-like MVIB (84 aa).

Residues Met-1 to Ala-22 form the signal peptide. A propeptide spanning residues Asp-23 to Arg-51 is cleaved from the precursor. Cystine bridges form between Cys-54–Cys-69, Cys-61–Cys-73, and Cys-68–Cys-77. Pro-65 is modified (4-hydroxyproline). Ser-83 carries the post-translational modification Serine amide.

This sequence belongs to the conotoxin O1 superfamily. In terms of tissue distribution, expressed by the venom duct.

The protein resides in the secreted. Functionally, delta-conotoxins bind to site 6 of voltage-gated sodium channels (Nav) and inhibit the inactivation process. The chain is Delta-conotoxin-like MVIB from Conus magus (Magical cone).